Consider the following 88-residue polypeptide: Cell division topological specificity factor (88 aa).

Belongs to the MinE family.

Its function is as follows. Prevents the cell division inhibition by proteins MinC and MinD at internal division sites while permitting inhibition at polar sites. This ensures cell division at the proper site by restricting the formation of a division septum at the midpoint of the long axis of the cell. The polypeptide is Cell division topological specificity factor (Herminiimonas arsenicoxydans).